We begin with the raw amino-acid sequence, 428 residues long: 3-oxo-tetronate kinase (428 aa).

ATP is bound by residues Ser267, 365 to 368, and Gly409; that span reads GGET.

This sequence belongs to the four-carbon acid sugar kinase family.

The catalysed reaction is 3-dehydro-L-erythronate + ATP = 3-dehydro-4-O-phospho-L-erythronate + ADP + H(+). It carries out the reaction 3-dehydro-D-erythronate + ATP = 3-dehydro-4-O-phospho-D-erythronate + ADP + H(+). In terms of biological role, catalyzes the ATP-dependent phosphorylation of 3-oxo-tetronate to 3-oxo-tetronate 4-phosphate. The chain is 3-oxo-tetronate kinase from Burkholderia multivorans (strain ATCC 17616 / 249).